The following is a 118-amino-acid chain: Large ribosomal subunit protein bL20 (118 aa).

The protein belongs to the bacterial ribosomal protein bL20 family.

In terms of biological role, binds directly to 23S ribosomal RNA and is necessary for the in vitro assembly process of the 50S ribosomal subunit. It is not involved in the protein synthesizing functions of that subunit. This Protochlamydia amoebophila (strain UWE25) protein is Large ribosomal subunit protein bL20.